The sequence spans 700 residues: Protein claret segregational (700 aa).

A phosphoserine mark is found at Ser94 and Ser96. The segment at 141–185 (APSSITATAVKRPPVTRPAPRAAGGAAAKKPAGTGAAASSGAAAA) is disordered. Over residues 149 to 185 (AVKRPPVTRPAPRAAGGAAAKKPAGTGAAASSGAAAA) the composition is skewed to low complexity. Positions 196-346 (KARFHDLLEK…ELHNTVMDLR (151 aa)) form a coiled coil. The Kinesin motor domain occupies 348–670 (NIRVFCRIRP…LRFAASVNSC (323 aa)). 434 to 441 (GQTGSGKT) is an ATP binding site. Residues 664-668 (AASVN) are required for minus-end directionality. The segment at 681–700 (LNNSVANSSTQSNNSGSFDK) is disordered.

Belongs to the TRAFAC class myosin-kinesin ATPase superfamily. Kinesin family. NCD subfamily.

Its subcellular location is the cytoplasm. It is found in the cytoskeleton. The enzyme catalyses ATP + H2O = ADP + phosphate + H(+). Its function is as follows. Minus-end-directed microtubule-based motor protein. Has ATPase activity. Required for normal chromosomal segregation in meiosis in females, and in early mitotic divisions of the embryo. This Drosophila melanogaster (Fruit fly) protein is Protein claret segregational (ncd).